The sequence spans 333 residues: UPF0324 membrane protein WS2204 (333 aa).

Transmembrane regions (helical) follow at residues 4–26, 31–53, 59–81, 88–110, 125–147, 154–176, 218–240, 253–275, and 310–332; these read SIRP…FGLA, FLSL…APWY, IGII…LFGF, LLGV…FTLG, SMLI…ESLS, TAIA…PLVY, VIVK…FTIL, PWFA…PSWL, and ALAL…VKLL.

Belongs to the UPF0324 family.

Its subcellular location is the cell membrane. This is UPF0324 membrane protein WS2204 from Wolinella succinogenes (strain ATCC 29543 / DSM 1740 / CCUG 13145 / JCM 31913 / LMG 7466 / NCTC 11488 / FDC 602W) (Vibrio succinogenes).